The primary structure comprises 893 residues: Pentatricopeptide repeat-containing protein At5g52850, chloroplastic (893 aa).

PPR repeat units lie at residues 57–87 (NLDL…MSHR), 88–122 (TVFA…GTHP), 123–157 (NEFT…GFEG), 158–188 (NSVV…LQNA), 189–223 (DTIS…GVPP), 224–257 (NEFT…GIPL), 258–288 (NVVL…SGEQ), 289–323 (DVFL…GLQP), 324–358 (NNFT…GFED), 359–390 (STDV…MVSP), 391–425 (NVVS…EVEP), 426–460 (NVVT…HVDG), 461–491 (EMVV…MKRR), 492–526 (DNIT…GIRM), 527–561 (DQLS…GFSG), 562–592 (AASV…IATP), 593–627 (DVVS…ETEP), 628–658 (DSVT…MKKI), and 664–694 (QVEH…MHLK). The interval 699 to 774 (IFKTLLRACR…KLGKSTVEVQ (76 aa)) is type E motif. Residues 775-806 (GKVHSFVSEDVTRVDKTNGIYAEIESIKEEIK) are type E(+) motif. Positions 807 to 893 (RFGSPYRGNE…SCKREETSFV (87 aa)) are type DYW motif.

It belongs to the PPR family. PCMP-H subfamily.

The protein localises to the plastid. Its subcellular location is the chloroplast. The sequence is that of Pentatricopeptide repeat-containing protein At5g52850, chloroplastic (PCMP-H31) from Arabidopsis thaliana (Mouse-ear cress).